The primary structure comprises 121 residues: Large ribosomal subunit protein uL14c (121 aa).

Belongs to the universal ribosomal protein uL14 family. Part of the 50S ribosomal subunit.

The protein localises to the plastid. It is found in the chloroplast. Binds to 23S rRNA. The protein is Large ribosomal subunit protein uL14c of Tetradesmus obliquus (Green alga).